The primary structure comprises 539 residues: O-phosphoserine--tRNA(Cys) ligase (539 aa).

Substrate contacts are provided by residues 188–190 (HMT), 233–235 (SAS), 275–276 (YY), and Asn-319.

The protein belongs to the class-II aminoacyl-tRNA synthetase family. O-phosphoseryl-tRNA(Cys) synthetase subfamily. Homotetramer. Interacts with SepCysS.

The enzyme catalyses tRNA(Cys) + O-phospho-L-serine + ATP = O-phospho-L-seryl-tRNA(Cys) + AMP + diphosphate. Its function is as follows. Catalyzes the attachment of O-phosphoserine (Sep) to tRNA(Cys). The sequence is that of O-phosphoserine--tRNA(Cys) ligase (sepS) from Methanocaldococcus jannaschii (strain ATCC 43067 / DSM 2661 / JAL-1 / JCM 10045 / NBRC 100440) (Methanococcus jannaschii).